The sequence spans 152 residues: 3-dehydroquinate dehydratase (152 aa).

Residue Tyr26 is the Proton acceptor of the active site. Residues Asn77, His83, and Asp90 each contribute to the substrate site. The active-site Proton donor is the His103. Residues 104-105 (LS) and Arg114 each bind substrate.

It belongs to the type-II 3-dehydroquinase family. Homododecamer.

The enzyme catalyses 3-dehydroquinate = 3-dehydroshikimate + H2O. It functions in the pathway metabolic intermediate biosynthesis; chorismate biosynthesis; chorismate from D-erythrose 4-phosphate and phosphoenolpyruvate: step 3/7. Functionally, catalyzes a trans-dehydration via an enolate intermediate. The sequence is that of 3-dehydroquinate dehydratase (aroQ) from Synechocystis sp. (strain ATCC 27184 / PCC 6803 / Kazusa).